The sequence spans 145 residues: D-aminoacyl-tRNA deacylase (145 aa).

Residues 137-138 carry the Gly-cisPro motif, important for rejection of L-amino acids motif; it reads GP.

Belongs to the DTD family. In terms of assembly, homodimer.

The protein resides in the cytoplasm. It catalyses the reaction glycyl-tRNA(Ala) + H2O = tRNA(Ala) + glycine + H(+). The catalysed reaction is a D-aminoacyl-tRNA + H2O = a tRNA + a D-alpha-amino acid + H(+). An aminoacyl-tRNA editing enzyme that deacylates mischarged D-aminoacyl-tRNAs. Also deacylates mischarged glycyl-tRNA(Ala), protecting cells against glycine mischarging by AlaRS. Acts via tRNA-based rather than protein-based catalysis; rejects L-amino acids rather than detecting D-amino acids in the active site. By recycling D-aminoacyl-tRNA to D-amino acids and free tRNA molecules, this enzyme counteracts the toxicity associated with the formation of D-aminoacyl-tRNA entities in vivo and helps enforce protein L-homochirality. The chain is D-aminoacyl-tRNA deacylase from Shigella dysenteriae serotype 1 (strain Sd197).